A 294-amino-acid chain; its full sequence is 4-hydroxy-tetrahydrodipicolinate synthase (294 aa).

Thr47 contacts pyruvate. Catalysis depends on Tyr135, which acts as the Proton donor/acceptor. The active-site Schiff-base intermediate with substrate is Lys163. Thr205 is a pyruvate binding site.

This sequence belongs to the DapA family. As to quaternary structure, homotetramer; dimer of dimers.

It localises to the cytoplasm. It catalyses the reaction L-aspartate 4-semialdehyde + pyruvate = (2S,4S)-4-hydroxy-2,3,4,5-tetrahydrodipicolinate + H2O + H(+). Its pathway is amino-acid biosynthesis; L-lysine biosynthesis via DAP pathway; (S)-tetrahydrodipicolinate from L-aspartate: step 3/4. In terms of biological role, catalyzes the condensation of (S)-aspartate-beta-semialdehyde [(S)-ASA] and pyruvate to 4-hydroxy-tetrahydrodipicolinate (HTPA). The chain is 4-hydroxy-tetrahydrodipicolinate synthase from Rickettsia peacockii (strain Rustic).